The following is a 327-amino-acid chain: UPF0065 protein in gbd 5'region (327 aa).

A signal peptide (tat-type signal) is located at residues 1 to 30 (MQRRHFIARAGIAAATAALGLAAMPAQAQA).

Belongs to the UPF0065 (bug) family. In terms of processing, predicted to be exported by the Tat system. The position of the signal peptide cleavage has not been experimentally proven.

The protein localises to the periplasm. The protein is UPF0065 protein in gbd 5'region of Cupriavidus necator (Alcaligenes eutrophus).